A 195-amino-acid polypeptide reads, in one-letter code: 7-methyl-GTP pyrophosphatase (195 aa).

D70 acts as the Proton acceptor in catalysis.

The protein belongs to the Maf family. YceF subfamily. The cofactor is a divalent metal cation.

It is found in the cytoplasm. It carries out the reaction N(7)-methyl-GTP + H2O = N(7)-methyl-GMP + diphosphate + H(+). In terms of biological role, nucleoside triphosphate pyrophosphatase that hydrolyzes 7-methyl-GTP (m(7)GTP). May have a dual role in cell division arrest and in preventing the incorporation of modified nucleotides into cellular nucleic acids. In Shewanella sp. (strain MR-4), this protein is 7-methyl-GTP pyrophosphatase.